The following is a 109-amino-acid chain: Sperm-specific class P protein 10 (109 aa).

One can recognise an MSP domain in the interval 2–109 (SLTADPPACT…TVTIPMSATA (108 aa)).

In terms of tissue distribution, expressed at higher level in testis.

The polypeptide is Sperm-specific class P protein 10 (ssp-10) (Caenorhabditis elegans).